A 178-amino-acid chain; its full sequence is Photosystem I assembly protein Ycf4 (178 aa).

2 helical membrane-spanning segments follow: residues 19-39 (FLVA…SLSS) and 61-81 (LVMG…WYVI).

The protein belongs to the Ycf4 family.

The protein resides in the cellular thylakoid membrane. Its function is as follows. Seems to be required for the assembly of the photosystem I complex. The polypeptide is Photosystem I assembly protein Ycf4 (Synechococcus sp. (strain CC9902)).